The sequence spans 670 residues: Outer dynein arm-docking complex subunit 1 (670 aa).

Coiled-coil stretches lie at residues 9–155, 183–224, and 302–381; these read SKEV…RYLN, AVRE…EQLH, and NFIN…IQLL. The disordered stretch occupies residues 454–473; that stretch reads KMAPLQPPDTLEDPPGFEAS. Serine 517 carries the phosphoserine modification. Disordered stretches follow at residues 526–596 and 616–670; these read AGSS…ASSG and VGSS…DSRG. The span at 584–596 shows a compositional bias: polar residues; that stretch reads GHVTFGSTSASSG. A compositionally biased stretch (low complexity) spans 650–670; it reads SSTGPASSTGPGSSTSKDSRG.

This sequence belongs to the ODA1/DCC2 family. As to quaternary structure, component of the outer dynein arm-docking complex along with ODAD2, ODAD3, ODAD4 and CLXN. Interacts with ODAD3. Interacts with ODAD4; this interaction may facilitate the recruitment and/or attachment of outer dynein arm docking complex proteins, including ODAD1, ODAD3, and ODAD4 to ciliary axonemes. Interacts with DNAH9. Interacts with MNS1. Interacts with PIERCE1 and PIERCE2; the interactions link the outer dynein arms docking complex (ODA-DC) to the internal microtubule inner proteins (MIP) in cilium axoneme. In terms of tissue distribution, expressed in nasal epithelial cells. Highly expressed in testis and also detected in lung, brain and kidney.

It localises to the cytoplasm. The protein localises to the cytoskeleton. The protein resides in the cilium axoneme. In terms of biological role, component of the outer dynein arm-docking complex (ODA-DC) that mediates outer dynein arms (ODA) binding onto the doublet microtubule. Involved in mediating assembly of both ODAs and their axonemal docking complex onto ciliary microtubules. The protein is Outer dynein arm-docking complex subunit 1 of Homo sapiens (Human).